The sequence spans 50 residues: uncharacterized protein (50 aa).

This is an uncharacterized protein from Saccharomyces cerevisiae (strain ATCC 204508 / S288c) (Baker's yeast).